Consider the following 215-residue polypeptide: N-(5'-phosphoribosyl)anthranilate isomerase (215 aa).

It belongs to the TrpF family.

It carries out the reaction N-(5-phospho-beta-D-ribosyl)anthranilate = 1-(2-carboxyphenylamino)-1-deoxy-D-ribulose 5-phosphate. It participates in amino-acid biosynthesis; L-tryptophan biosynthesis; L-tryptophan from chorismate: step 3/5. The polypeptide is N-(5'-phosphoribosyl)anthranilate isomerase (Chlorobium phaeobacteroides (strain DSM 266 / SMG 266 / 2430)).